The following is a 213-amino-acid chain: FMN-dependent NADH:quinone oxidoreductase (213 aa).

Position 10 (S10) interacts with FMN.

The protein belongs to the azoreductase type 1 family. Homodimer. The cofactor is FMN.

The catalysed reaction is 2 a quinone + NADH + H(+) = 2 a 1,4-benzosemiquinone + NAD(+). It catalyses the reaction N,N-dimethyl-1,4-phenylenediamine + anthranilate + 2 NAD(+) = 2-(4-dimethylaminophenyl)diazenylbenzoate + 2 NADH + 2 H(+). Quinone reductase that provides resistance to thiol-specific stress caused by electrophilic quinones. Its function is as follows. Also exhibits azoreductase activity. Catalyzes the reductive cleavage of the azo bond in aromatic azo compounds to the corresponding amines. This Opitutus terrae (strain DSM 11246 / JCM 15787 / PB90-1) protein is FMN-dependent NADH:quinone oxidoreductase.